A 355-amino-acid polypeptide reads, in one-letter code: UPF0324 membrane protein PA5383 (355 aa).

The next 10 membrane-spanning stretches (helical) occupy residues Ile20–Gly37, His44–Pro66, Gly71–Leu93, Ile100–Ala122, Thr137–Val159, Val166–Phe188, Ala233–Leu255, Trp275–Val297, Leu307–Ile324, and Pro331–Ala353.

This sequence belongs to the UPF0324 family.

The protein resides in the cell membrane. This chain is UPF0324 membrane protein PA5383, found in Pseudomonas aeruginosa (strain ATCC 15692 / DSM 22644 / CIP 104116 / JCM 14847 / LMG 12228 / 1C / PRS 101 / PAO1).